Here is a 400-residue protein sequence, read N- to C-terminus: Multidrug resistance protein MdtH (400 aa).

Residues 1-12 are Cytoplasmic-facing; sequence MSRVSQARNLGK. The chain crosses the membrane as a helical span at residues 13–33; it reads YFLLIDNMLVVLGFFVVFPLI. The Periplasmic segment spans residues 34–98; the sequence is SIRFVDQMGW…GFATMGIAHE (65 aa). Residues 99 to 116 form a helical membrane-spanning segment; it reads PWLLWFSCLLSGLGGTLF. Over 117–138 the chain is Cytoplasmic; the sequence is DPPRSALVVKLIRPQQRGRFFS. Residues 139 to 159 traverse the membrane as a helical segment; sequence LLMMQDSAGAVIGALLGSWLL. The Periplasmic portion of the chain corresponds to 160–164; that stretch reads QYDFR. Residues 165-185 form a helical membrane-spanning segment; sequence LVCATGAVLFVLCAAFNAWLL. Topologically, residues 186–213 are cytoplasmic; sequence PAWKLSTVRTPVREGMTRVMRDKRFVTY. The helical transmembrane segment at 214-232 threads the bilayer; the sequence is VLTLAGYYMLAVQVMLPIM. Topologically, residues 233 to 241 are periplasmic; it reads VNDVAGAPS. A helical transmembrane segment spans residues 242–262; it reads AVKWMYAIEACLSLTLLYPIA. Residues 263-274 are Cytoplasmic-facing; sequence RWSEKHFRLEHR. Residues 275 to 295 form a helical membrane-spanning segment; sequence LMAGLLIMSLSMMPVGMVSGL. Residues 296–297 are Periplasmic-facing; the sequence is QQ. The helical transmembrane segment at 298–318 threads the bilayer; it reads LFTLICLFYIGSIIAEPARET. Residues 319 to 337 are Cytoplasmic-facing; it reads LSASLADARARGSYMGFSR. A helical membrane pass occupies residues 338-358; it reads LGLAIGGAIGYIGGGWLFDLG. Topologically, residues 359 to 365 are periplasmic; the sequence is KSAHQPE. A helical membrane pass occupies residues 366–386; that stretch reads LPWMMLGIIGIFTFLALGWQF. At 387–400 the chain is on the cytoplasmic side; sequence SQKRAARRLLERDA.

It belongs to the major facilitator superfamily. DHA1 family. MdtH (TC 2.A.1.2.21) subfamily.

The protein resides in the cell inner membrane. This Shigella boydii serotype 4 (strain Sb227) protein is Multidrug resistance protein MdtH.